The chain runs to 392 residues: Formate-dependent phosphoribosylglycinamide formyltransferase (392 aa).

N(1)-(5-phospho-beta-D-ribosyl)glycinamide-binding positions include 22–23 (EL) and glutamate 82. Residues arginine 114, lysine 155, 160–165 (SSGKGQ), 195–198 (EGVV), and glutamate 203 contribute to the ATP site. The region spanning 119 to 308 (RLAAEELQLP…EFALHVRAFL (190 aa)) is the ATP-grasp domain. Positions 267 and 279 each coordinate Mg(2+). N(1)-(5-phospho-beta-D-ribosyl)glycinamide is bound by residues aspartate 286, lysine 355, and 362 to 363 (RR).

This sequence belongs to the PurK/PurT family. Homodimer.

The catalysed reaction is N(1)-(5-phospho-beta-D-ribosyl)glycinamide + formate + ATP = N(2)-formyl-N(1)-(5-phospho-beta-D-ribosyl)glycinamide + ADP + phosphate + H(+). Its pathway is purine metabolism; IMP biosynthesis via de novo pathway; N(2)-formyl-N(1)-(5-phospho-D-ribosyl)glycinamide from N(1)-(5-phospho-D-ribosyl)glycinamide (formate route): step 1/1. Functionally, involved in the de novo purine biosynthesis. Catalyzes the transfer of formate to 5-phospho-ribosyl-glycinamide (GAR), producing 5-phospho-ribosyl-N-formylglycinamide (FGAR). Formate is provided by PurU via hydrolysis of 10-formyl-tetrahydrofolate. The polypeptide is Formate-dependent phosphoribosylglycinamide formyltransferase (Shigella dysenteriae serotype 1 (strain Sd197)).